Reading from the N-terminus, the 244-residue chain is Probable 2-phosphosulfolactate phosphatase (244 aa).

Belongs to the ComB family. It depends on Mg(2+) as a cofactor.

It catalyses the reaction (2R)-O-phospho-3-sulfolactate + H2O = (2R)-3-sulfolactate + phosphate. The chain is Probable 2-phosphosulfolactate phosphatase from Thermosynechococcus vestitus (strain NIES-2133 / IAM M-273 / BP-1).